Consider the following 440-residue polypeptide: Polycomb group protein VERNALIZATION 2 (440 aa).

The C2H2-type zinc-finger motif lies at 86-111; the sequence is EDCSCPFCSMLCGSFKGLQFHLNSSH. Residues 156–163 carry the Nuclear localization signal motif; it reads KPRKRRQR. A VEFS-box region spans residues 267 to 345; it reads RQFYHSHRVQ…GHISWACEVF (79 aa). Residues 398–440 form a disordered region; it reads NNNNNSVDHPSDSNTNNNNIVDHPNDIKNKNNVDNKDNNSRDK. Basic and acidic residues predominate over residues 420-440; sequence HPNDIKNKNNVDNKDNNSRDK.

Belongs to the VEFS (VRN2-EMF2-FIS2-SU(Z)12) family. Probable component of a PcG complex. In plants, PcG complexes are probably composed of a member of the EZ family (CLF or MEA), FIE, and a member of the VEFS family (FIS2, VRN2 or EMF2). Component of the plant homeodomain / polycomb repressive complex 2 (PHD-PRC2) large complex during prolonged cold, composed of core PRC2 components (VRN2, EZA1, FIE and MSI1), and three related PHD finger proteins (VIL1, VIL2 and VIN3) that mediates histone H3 trimethylation on 'Lys-27' (H3K27me3). Binds to ALP1. Weakly expressed. Expressed both during, and in the absence of vernalization.

The protein resides in the nucleus. Polycomb group (PcG) protein. Plays a central role in vernalization by maintaining repressed the homeotic gene FLC, a floral repressor, after a cold treatment. PcG proteins act by forming multiprotein complexes, which are required to maintain the transcriptionally repressive state of homeotic genes throughout development. PcG proteins are not required to initiate repression, but to maintain it during later stages of development. They probably act via the methylation of histones, rendering chromatin heritably changed in its expressibility. Associates constitutively along the whole FLC locus. The polypeptide is Polycomb group protein VERNALIZATION 2 (VRN2) (Arabidopsis thaliana (Mouse-ear cress)).